Consider the following 392-residue polypeptide: O-phospho-L-seryl-tRNA:Cys-tRNA synthase 2 (392 aa).

Residues 85 to 86, Asn190, and 213 to 215 contribute to the pyridoxal 5'-phosphate site; these read AR and SGH. N6-(pyridoxal phosphate)lysine is present on Lys216.

The protein belongs to the SepCysS family. Homodimer. Interacts with SepRS. Pyridoxal 5'-phosphate serves as cofactor.

The catalysed reaction is O-phospho-L-seryl-tRNA(Cys) + hydrogen sulfide + H(+) = L-cysteinyl-tRNA(Cys) + phosphate. In terms of biological role, converts O-phospho-L-seryl-tRNA(Cys) (Sep-tRNA(Cys)) to L-cysteinyl-tRNA(Cys) (Cys-tRNA(Cys)). In Methanocorpusculum labreanum (strain ATCC 43576 / DSM 4855 / Z), this protein is O-phospho-L-seryl-tRNA:Cys-tRNA synthase 2.